Consider the following 525-residue polypeptide: DNA damage-binding protein cmr1 (525 aa).

Polar residues predominate over residues 34-50 (TGVFTSNMPRGTSANQS). 3 disordered regions span residues 34–103 (TGVF…ERAK), 214–240 (DASQEKPTSAVKNEDDEDDEDDDDPDP), and 282–301 (TSSVEKYAPESTSDDVPISG). Positions 83–102 (EIAKRKADEEYDRRQEEERA) are enriched in basic and acidic residues. The WD 1 repeat unit spans residues 182–223 (ITPERIYSMTFHPSEAKPVIFAGDKMGHLGILDASQEKPTSA). Residues 227–239 (EDDEDDEDDDDPD) show a composition bias toward acidic residues. 5 WD repeats span residues 247 to 287 (PHTR…SVEK), 339 to 379 (LSEK…HTDP), 384 to 425 (EHQS…SSWK), 448 to 491 (GRWV…LAQL), and 494 to 525 (DGITAVPAVAVFHRSKNWVAGGTASGKICLWM).

This sequence belongs to the WD repeat DDB2/WDR76 family.

Functionally, DNA-binding protein that binds to both single- and double-stranded DNA. Binds preferentially to UV-damaged DNA. May be involved in DNA-metabolic processes. This chain is DNA damage-binding protein cmr1, found in Emericella nidulans (strain FGSC A4 / ATCC 38163 / CBS 112.46 / NRRL 194 / M139) (Aspergillus nidulans).